A 468-amino-acid polypeptide reads, in one-letter code: UDP-N-acetylmuramoyl-L-alanine--L-glutamate ligase (468 aa).

122 to 128 (GTKGKST) contacts ATP.

Belongs to the MurCDEF family. MurD2 subfamily.

The protein resides in the cytoplasm. It catalyses the reaction UDP-N-acetyl-alpha-D-muramoyl-L-alanine + L-glutamate + ATP = UDP-N-acetyl-alpha-D-muramoyl-L-alanyl-L-glutamate + ADP + phosphate + H(+). The protein operates within cell wall biogenesis; peptidoglycan biosynthesis. Its function is as follows. Cell wall formation. Catalyzes the addition of L-glutamate to the nucleotide precursor UDP-N-acetylmuramoyl-L-alanine. This is UDP-N-acetylmuramoyl-L-alanine--L-glutamate ligase from Xanthomonas campestris pv. campestris (strain 8004).